A 254-amino-acid polypeptide reads, in one-letter code: 5-oxoprolinase subunit A (254 aa).

This sequence belongs to the LamB/PxpA family. Forms a complex composed of PxpA, PxpB and PxpC.

It catalyses the reaction 5-oxo-L-proline + ATP + 2 H2O = L-glutamate + ADP + phosphate + H(+). Its function is as follows. Catalyzes the cleavage of 5-oxoproline to form L-glutamate coupled to the hydrolysis of ATP to ADP and inorganic phosphate. This is 5-oxoprolinase subunit A from Burkholderia vietnamiensis (strain G4 / LMG 22486) (Burkholderia cepacia (strain R1808)).